The sequence spans 308 residues: FGSLLGICLATQIITGLLMAMHYTADTTLAFTSVAHTCRNVQFGWLIRNLHANGASMFFICIYLHIGRGLYYGSYLFKETWNTGVILLLTLMATAFVGYVLPWGQMSFWGATVITNLFSAIPYIGQTIVEWAWGGFSVDNPTLTRFFALHFLLPFIITGLTLVHLTFLHETGSNNPLGIPSECDKIPFHPYFSIKDILGFMAMLLPLMSLAMFSPNLLGDPENFTPANPLVTPLHIKPEWYFLFAYAILRSIPNKLGGVLALAASVLILFLIPFLHKSKQRTMTFRPLSQLMFWILVANLLILTWVGS.

The next 4 helical transmembrane spans lie at 1 to 21 (FGSL…LMAM), 45 to 66 (WLIR…YLHI), 81 to 101 (WNTG…GYVL), and 146 to 166 (FFAL…VHLT). Residues His-51 and His-65 each contribute to the heme b site. Positions 150 and 164 each coordinate heme b. His-169 is an a ubiquinone binding site. Transmembrane regions (helical) follow at residues 194-214 (IKDI…AMFS), 256-276 (LGGV…PFLH), and 288-308 (LSQL…WVGS).

Belongs to the cytochrome b family. In terms of assembly, the cytochrome bc1 complex contains 11 subunits: 3 respiratory subunits (MT-CYB, CYC1 and UQCRFS1), 2 core proteins (UQCRC1 and UQCRC2) and 6 low-molecular weight proteins (UQCRH/QCR6, UQCRB/QCR7, UQCRQ/QCR8, UQCR10/QCR9, UQCR11/QCR10 and a cleavage product of UQCRFS1). This cytochrome bc1 complex then forms a dimer. Requires heme b as cofactor.

The protein resides in the mitochondrion inner membrane. Functionally, component of the ubiquinol-cytochrome c reductase complex (complex III or cytochrome b-c1 complex) that is part of the mitochondrial respiratory chain. The b-c1 complex mediates electron transfer from ubiquinol to cytochrome c. Contributes to the generation of a proton gradient across the mitochondrial membrane that is then used for ATP synthesis. This is Cytochrome b (MT-CYB) from Scytalopus magellanicus (Magellanic tapaculo).